The following is a 451-amino-acid chain: Gamma-aminobutyric acid receptor subunit alpha-2 (451 aa).

A signal peptide spans 1–28; sequence MKTKLNIYNMQLLLFVFLVWDPARLVLA. The Extracellular segment spans residues 29–249; the sequence is NIQEDEAKNN…MTAHFHLKRK (221 aa). A glycan (N-linked (GlcNAc...) asparagine) is linked at Asn38. Residue Arg94 coordinates 4-aminobutanoate. Residue Asn138 is glycosylated (N-linked (GlcNAc...) asparagine). 4-aminobutanoate is bound at residue Thr157. A disulfide bridge links Cys166 with Cys180. A helical membrane pass occupies residues 250–270; that stretch reads IGYFVIQTYLPCIMTVILSQV. Residues 271 to 280 lie on the Cytoplasmic side of the membrane; it reads SFWLNRESVP. A helical transmembrane segment spans residues 281–300; sequence ARTVFGVTTVLTMTTLSISA. Topologically, residues 301–311 are extracellular; it reads RNSLPKVAYAT. A helical transmembrane segment spans residues 312-332; that stretch reads AMDWFIAVCYAFVFSALIEFA. The Cytoplasmic portion of the chain corresponds to 333-420; the sequence is TVNYFTKRGW…FNSVSKIDRM (88 aa). The chain crosses the membrane as a helical span at residues 421–441; it reads SRIVFPVLFGTFNLVYWATYL. Over 442 to 451 the chain is Extracellular; the sequence is NREPVLGVSP.

The protein belongs to the ligand-gated ion channel (TC 1.A.9) family. Gamma-aminobutyric acid receptor (TC 1.A.9.5) subfamily. GABRA2 sub-subfamily. Heteropentamer, formed by a combination of alpha (GABRA1-6), beta (GABRB1-3), gamma (GABRG1-3), delta (GABRD), epsilon (GABRE), rho (GABRR1-3), pi (GABRP) and theta (GABRQ) subunits, each subunit exhibiting distinct physiological and pharmacological properties. Interacts with UBQLN1. Interacts with KIF21B. Interacts with LHFPL4. Interacts with SHISA7; interaction leads to the regulation of GABA(A) receptor trafficking, channel deactivation kinetics and pharmacology. In terms of processing, glycosylated.

Its subcellular location is the postsynaptic cell membrane. It is found in the cell membrane. The protein localises to the cytoplasmic vesicle membrane. The protein resides in the cell projection. It localises to the dendrite. The enzyme catalyses chloride(in) = chloride(out). Activated by pentobarbital. Inhibited by the antagonist bicuculline. Alpha subunit of the heteropentameric ligand-gated chloride channel gated by gamma-aminobutyric acid (GABA), a major inhibitory neurotransmitter in the brain. GABA-gated chloride channels, also named GABA(A) receptors (GABAAR), consist of five subunits arranged around a central pore and contain GABA active binding site(s) located at the alpha and beta subunit interface(s). When activated by GABA, GABAARs selectively allow the flow of chloride anions across the cell membrane down their electrochemical gradient. Chloride influx into the postsynaptic neuron following GABAAR opening decreases the neuron ability to generate a new action potential, thereby reducing nerve transmission. The alpha-2 subunit exhibits synaptogenic activity together with beta-2 and very little to no activity together with beta-3, the gamma-2 subunit being necessary but not sufficient to induce rapid synaptic contacts formation. The protein is Gamma-aminobutyric acid receptor subunit alpha-2 (GABRA2) of Pongo abelii (Sumatran orangutan).